The chain runs to 1663 residues: Complement C3 (1663 aa).

A signal peptide spans 1–24 (MGPASGSQLLVLLLLLASSPLALG). S40 carries the phosphoserine modification. Disulfide bonds link C559–C816, C626–C661, C693–C720, C694–C727, C707–C728, C873–C1513, C1101–C1158, C1358–C1489, C1389–C1458, C1506–C1511, C1518–C1590, C1537–C1661, and C1637–C1646. S671 carries the post-translational modification Phosphoserine. Residues 693–728 (CCEDGMRDIPMRYSCQRRARLITQGENCIKAFIDCC) form the Anaphylatoxin-like domain. N939 is a glycosylation site (N-linked (GlcNAc...) asparagine). Position 968 is a phosphoserine (S968). A cross-link (isoglutamyl cysteine thioester (Cys-Gln)) is located at residues 1010 to 1013 (CGEQ). S1321 carries the phosphoserine modification. The NTR domain occupies 1518–1661 (CFMQQSQEKI…FTESMVVYGC (144 aa)). S1573 carries the post-translational modification Phosphoserine. N-linked (GlcNAc...) asparagine glycosylation is present at N1617. The tract at residues 1634 to 1659 (AEECQDQKYQKQCEELGAFTESMVVY) is interaction with CFP/properdin.

In absence of complement activation, the C3 precursor is first processed by the removal of 4 Arg residues, forming two chains, beta and alpha, linked by a disulfide bond. In terms of assembly, complement C3b is composed of complement C3b and complement C3 beta chains that are associated via disulfide bonds. Non-enzymatic component of the C5 convertase, also named C4bC2bC3b, composed of the serine protease complement C2b (C2), complement C3b, as well as complement C4b (C4). Non-enzymatic component of the C5 convertase of the alternative complement pathways composed of the serine protease complement CFB and complement C3b. Interacts with CFP; interaction takes place together with CFB in the alternative complement system and allows the complex to become active. Interacts with CR1 (via Sushi 8 and Sushi 9 domains). Interacts with CFH. As to quaternary structure, interacts with CFH. Interacts with CR2. During pregnancy, C3dg exists as a complex (probably a 2:2:2 heterohexamer) with AGT and the proform of PRG2. Interacts with CR2 (via the N-terminal Sushi domains 1 and 2). C3 precursor is first processed by the removal of 4 Arg residues, forming two chains, beta and alpha, linked by a disulfide bond. During activation of the complement systems, the alpha chain is cleaved into C3a and C3b by the C3 convertase: C3b stays linked to the beta chain, while C3a is released in the plasma. The alpha chain is cleaved by the serine protease complement C2b component of the C3 convertase to generate C3a and C3b following activation by the classical, lectin and GZMK complement systems. The alpha chain is cleaved by CFB component of the C3 convertase to generate C3a and C3b following activation by the alternative complement system. In terms of processing, C3a is further processed by carboxypeptidases to release the C-terminal arginine residue generating the acylation stimulating protein (ASP). Levels of ASP are increased in adipocytes in the postprandial period and by insulin and dietary chylomicrons. Post-translationally, complement C3b is rapidly split in two positions by factor I (CFI) and a cofactor (CFH) to form iC3b (inactivated C3b) and C3f which is released. CFI and CFH catalyze proteolytic degradation of already-deposited complement C3b. Then iC3b is slowly cleaved (possibly by CFI) to form C3c (beta chain + alpha' chain fragment 1 + alpha' chain fragment 2), C3dg and C3f. Other proteases produce other fragments such as C3d or C3g. Upon activation, the internal thioester bond reacts with carbohydrate antigens on the target surface to form amide or ester bonds, leading to covalent association with the surface of pathogens. In terms of processing, complement C3b interacts with complement C4b via a thioester linkage. Post-translationally, phosphorylated by FAM20C in the extracellular medium.

The protein localises to the secreted. The protein resides in the cell surface. Its activity is regulated as follows. Complement activation is inhibited by VSIG4. Its function is as follows. Precursor of non-enzymatic components of the classical, alternative, lectin and GZMK complement pathways, which consist in a cascade of proteins that leads to phagocytosis and breakdown of pathogens and signaling that strengthens the adaptive immune system. In terms of biological role, non-enzymatic component of C5 convertase. Generated following cleavage by C3 convertase, it covalently attaches to the surface of pathogens, where it acts as an opsonin that marks the surface of antigens for removal. Complement C3b binds covalently via its reactive thioester, to cell surface carbohydrates or immune aggregates. Together with complement C4b, it then recruits the serine protease complement C2b to form the C5 convertase, which cleaves and activate C5, the next component of the complement pathways. In the alternative complement pathway, recruits the serine protease CFB to form the C5 convertase that cleaves and activates C5. Mediator of local inflammatory process released following cleavage by C3 convertase. Acts by binding to its receptor, C3AR1, activating G protein-coupled receptor signaling, promoting the phosphorylation, ARRB2-mediated internalization and endocytosis of C3AR1. C3a anaphylatoxin stimulates the activation of immune cells such as mast cells and basophilic leukocytes to release inflammation agents, such as cytokines, chemokines and histamine, which promote inflammation development. Also acts as potent chemoattractant for the migration of macrophages and neutrophils to the inflamed tissues, resulting in neutralization of the inflammatory triggers by multiple ways, such as phagocytosis and generation of reactive oxidants. Functionally, adipogenic hormone that stimulates triglyceride synthesis and glucose transport in adipocytes, regulating fat storage and playing a role in postprandial triglyceride clearance. Appears to stimulate triglyceride synthesis via activation of the PLC, MAPK and AKT signaling pathways. Acts by binding to its receptor, C5AR2, activating G protein-coupled receptor signaling, promoting the phosphorylation, ARRB2-mediated internalization and endocytosis of C5AR2. Its function is as follows. Acts as a chemoattractant for neutrophils in chronic inflammation. This chain is Complement C3, found in Mus musculus (Mouse).